A 396-amino-acid chain; its full sequence is Enoyl-[acyl-carrier-protein] reductase [NADH] (396 aa).

NAD(+) contacts are provided by residues 48–53, 74–75, 111–112, and 139–140; these read GASTGY, FE, DA, and LA. Tyr-225 is a binding site for substrate. Tyr-235 serves as the catalytic Proton donor. NAD(+)-binding positions include Lys-244 and 273 to 275; that span reads VVT.

The protein belongs to the TER reductase family. In terms of assembly, monomer.

The enzyme catalyses a 2,3-saturated acyl-[ACP] + NAD(+) = a (2E)-enoyl-[ACP] + NADH + H(+). It functions in the pathway lipid metabolism; fatty acid biosynthesis. In terms of biological role, involved in the final reduction of the elongation cycle of fatty acid synthesis (FAS II). Catalyzes the reduction of a carbon-carbon double bond in an enoyl moiety that is covalently linked to an acyl carrier protein (ACP). The chain is Enoyl-[acyl-carrier-protein] reductase [NADH] from Teredinibacter turnerae (strain ATCC 39867 / T7901).